A 64-amino-acid polypeptide reads, in one-letter code: Alpha-toxin Ts5 (64 aa).

The LCN-type CS-alpha/beta domain maps to 2-64 (KDGYPVEGDN…KEPTKTSGRC (63 aa)). 4 disulfides stabilise this stretch: cysteine 12–cysteine 64, cysteine 16–cysteine 38, cysteine 24–cysteine 44, and cysteine 28–cysteine 46.

It belongs to the long (4 C-C) scorpion toxin superfamily. Sodium channel inhibitor family. Alpha subfamily. Expressed by the venom gland.

It is found in the secreted. Its function is as follows. Alpha toxins bind voltage-independently at site-3 of sodium channels (Nav) and inhibit the inactivation of the activated channels, thereby blocking neuronal transmission. By extending the depolarized period it indirectly affects beta-cell voltage-dependent potassium channels, thus increasing potassium permeability. This is Alpha-toxin Ts5 from Tityus serrulatus (Brazilian scorpion).